Consider the following 445-residue polypeptide: Argininosuccinate synthase (445 aa).

ATP contacts are provided by residues 17–25 (AFSGGLDTS) and Ala43. Residue Tyr99 coordinates L-citrulline. ATP is bound by residues Gly129 and Thr131. Residues Thr131, Asn135, and Asp136 each coordinate L-aspartate. Asn135 is an L-citrulline binding site. Asp136 is a binding site for ATP. Residues Arg139 and Ser192 each contribute to the L-citrulline site. Asp194 provides a ligand contact to ATP. Residues Thr201, Glu203, and Glu280 each coordinate L-citrulline.

This sequence belongs to the argininosuccinate synthase family. Type 2 subfamily. In terms of assembly, homotetramer.

Its subcellular location is the cytoplasm. The enzyme catalyses L-citrulline + L-aspartate + ATP = 2-(N(omega)-L-arginino)succinate + AMP + diphosphate + H(+). It participates in amino-acid biosynthesis; L-arginine biosynthesis; L-arginine from L-ornithine and carbamoyl phosphate: step 2/3. This is Argininosuccinate synthase from Bradyrhizobium sp. (strain BTAi1 / ATCC BAA-1182).